Consider the following 325-residue polypeptide: Elongation factor P--(R)-beta-lysine ligase (325 aa).

Residue 76–78 participates in substrate binding; that stretch reads SPE. ATP is bound by residues 100–102 and Asn-109; that span reads RNE. Residue Tyr-118 coordinates substrate. Position 244–245 (244–245) interacts with ATP; that stretch reads EL. Glu-251 is a binding site for substrate. Residue Gly-300 coordinates ATP.

It belongs to the class-II aminoacyl-tRNA synthetase family. EpmA subfamily. As to quaternary structure, homodimer.

The enzyme catalyses D-beta-lysine + L-lysyl-[protein] + ATP = N(6)-((3R)-3,6-diaminohexanoyl)-L-lysyl-[protein] + AMP + diphosphate + H(+). Its function is as follows. With EpmB is involved in the beta-lysylation step of the post-translational modification of translation elongation factor P (EF-P). Catalyzes the ATP-dependent activation of (R)-beta-lysine produced by EpmB, forming a lysyl-adenylate, from which the beta-lysyl moiety is then transferred to the epsilon-amino group of a conserved specific lysine residue in EF-P. This Klebsiella pneumoniae subsp. pneumoniae (strain ATCC 700721 / MGH 78578) protein is Elongation factor P--(R)-beta-lysine ligase.